Reading from the N-terminus, the 361-residue chain is Spermatogenesis-associated protein 17 (361 aa).

3 consecutive IQ domains span residues 32–61, 55–84, and 91–120; these read ENDAAVKIQSWFRGCQVRAYVRHLNRIVTI, LNRIVTIIQKWWRSFLGRKQYQLTVQVAYY, and YNAMAVRKQRRWRGYRVRKYLFNYYYLKEY.

Its subcellular location is the cytoplasm. This Macaca fascicularis (Crab-eating macaque) protein is Spermatogenesis-associated protein 17 (SPATA17).